Consider the following 122-residue polypeptide: Large ribosomal subunit protein uL14c (122 aa).

The protein belongs to the universal ribosomal protein uL14 family. As to quaternary structure, part of the 50S ribosomal subunit.

Its subcellular location is the plastid. The protein localises to the chloroplast. Functionally, binds to 23S rRNA. This chain is Large ribosomal subunit protein uL14c, found in Tupiella akineta (Green alga).